A 197-amino-acid polypeptide reads, in one-letter code: MLFTIKPSFLKPVGFIQTRNLNRLYPKQRIPKRPKIPMGSKIAEVTETTSAYYNPPASSPDVRITPPVFRYDAPPIHQRDTSLSKESMFLPPAVSRKSKSKGKLRFSTHQLSSEDIKSIQDLRTKDPNAWTTGTLSKKFNTTRLLISRVCEAPKERIQKVEENFEAEKLAWGSKKREIRRQRASRQAFRTLERVAQV.

The N-terminal 20 residues, 1 to 20 (MLFTIKPSFLKPVGFIQTRN), are a transit peptide targeting the mitochondrion.

Belongs to the mitochondrion-specific ribosomal protein mL58 family. In terms of assembly, component of the mitochondrial large ribosomal subunit (mt-LSU). Mature yeast 74S mitochondrial ribosomes consist of a small (37S) and a large (54S) subunit. The 37S small subunit contains a 15S ribosomal RNA (15S mt-rRNA) and at least 32 different proteins. The 54S large subunit contains a 21S rRNA (21S mt-rRNA) and at least 45 different proteins.

It is found in the mitochondrion. Component of the mitochondrial ribosome (mitoribosome), a dedicated translation machinery responsible for the synthesis of mitochondrial genome-encoded proteins, including at least some of the essential transmembrane subunits of the mitochondrial respiratory chain. The mitoribosomes are attached to the mitochondrial inner membrane and translation products are cotranslationally integrated into the membrane. The sequence is that of Large ribosomal subunit protein mL58 (mrpl20) from Schizosaccharomyces pombe (strain 972 / ATCC 24843) (Fission yeast).